A 183-amino-acid polypeptide reads, in one-letter code: Fetal and adult testis-expressed transcript protein (183 aa).

Residues 42–66 are disordered; the sequence is SRSRGASQKKQKLEQKAAGSASAKR. A helical membrane pass occupies residues 163-181; that stretch reads TLIIAVLVSASIANLWLWM.

As to quaternary structure, interacts with BIK and RNF183. Interacts with IMMT/MIC60and EMD. In terms of tissue distribution, testis-specific in fetus (aged from 6 to 11 weeks). In adult, expressed predominantly in testis, with some expression in lung, heart, kidney, adrenal gland and whole brain. Highly expressed in certain types of cancer tissues such as hepatocellular carcinoma, colon and gastric cancer. Weakly expressed in normal pancreas.

It localises to the mitochondrion. The protein localises to the mitochondrion outer membrane. Its subcellular location is the endoplasmic reticulum membrane. In terms of biological role, involved in the regulation of endoplasmic reticulum (ER)-mitochondria coupling. Negatively regulates the ER-mitochondria distance and Ca(2+) transfer from ER to mitochondria possibly implicating it in the regulation of apoptosis. May collaborate with RNF183 to restrain BIK protein levels thus regulating apoptotic signaling. The protein is Fetal and adult testis-expressed transcript protein (FATE1) of Homo sapiens (Human).